The sequence spans 314 residues: Methionyl-tRNA formyltransferase (314 aa).

113 to 116 contributes to the (6S)-5,6,7,8-tetrahydrofolate binding site; sequence SLLP.

This sequence belongs to the Fmt family.

The catalysed reaction is L-methionyl-tRNA(fMet) + (6R)-10-formyltetrahydrofolate = N-formyl-L-methionyl-tRNA(fMet) + (6S)-5,6,7,8-tetrahydrofolate + H(+). Functionally, attaches a formyl group to the free amino group of methionyl-tRNA(fMet). The formyl group appears to play a dual role in the initiator identity of N-formylmethionyl-tRNA by promoting its recognition by IF2 and preventing the misappropriation of this tRNA by the elongation apparatus. The chain is Methionyl-tRNA formyltransferase from Pseudomonas syringae pv. syringae (strain B728a).